A 303-amino-acid polypeptide reads, in one-letter code: Cysteine synthase B (303 aa).

Residue Lys41 is modified to N6-(pyridoxal phosphate)lysine. Residues Asn71, 174–178, and Ser255 contribute to the pyridoxal 5'-phosphate site; that span reads GTTGT.

This sequence belongs to the cysteine synthase/cystathionine beta-synthase family. In terms of assembly, homodimer. Requires pyridoxal 5'-phosphate as cofactor.

It carries out the reaction O-acetyl-L-serine + hydrogen sulfide = L-cysteine + acetate. It functions in the pathway amino-acid biosynthesis; L-cysteine biosynthesis; L-cysteine from L-serine: step 2/2. Two cysteine synthase enzymes are found. Both catalyze the same reaction. Cysteine synthase B can also use thiosulfate in place of sulfide to give cysteine thiosulfonate as a product. This Escherichia coli (strain K12) protein is Cysteine synthase B (cysM).